The chain runs to 422 residues: Proton-gated ion channel subunit pbo-6 (422 aa).

A signal peptide spans 1 to 20; that stretch reads MQCSFLTIFIFITTVTVGVA. Residues 21 to 233 are Extracellular-facing; sequence EFSEQYQGSS…IKVARKPFYY (213 aa). An intrachain disulfide couples C151 to C165. 3 helical membrane-spanning segments follow: residues 234–254, 268–288, and 294–314; these read LISL…GLFA, LGVT…EKVP, and VPLL…ATIL. Residues 315 to 378 are Cytoplasmic-facing; that stretch reads TSTVMRVHAK…GEVSRRMDYL (64 aa). A helical membrane pass occupies residues 379 to 399; that stretch reads LASVFIIIISTPTLYLFYMCF.

The protein belongs to the ligand-gated ion channel (TC 1.A.9) family. Acetylcholine receptor (TC 1.A.9.1) subfamily. As to quaternary structure, the functional channel is a hetero-oligomer of pbo-5 and pbo-6. As to expression, expressed in the posterior body muscles.

It localises to the membrane. Functionally, forms a proton-gated ion channel with pbo-5 that is activated by acidification of the posterior coelomic space, leading to posterior body wall muscle contraction (pBoc) during the defecation cycle. Not necessary for stimulation of posterior body contraction (pBoc). Does not bind neurotransmitters such as acetylcholine, gamma-aminobutyric acid, glycine, serotonin, glutamate or choline. The sequence is that of Proton-gated ion channel subunit pbo-6 from Caenorhabditis elegans.